Here is a 428-residue protein sequence, read N- to C-terminus: Ectoine/5-hydroxyectoine TRAP transporter large permease protein UehC (428 aa).

12 helical membrane-spanning segments follow: residues 9–29 (MIVL…GAFI), 49–69 (LAGI…AADI), 99–119 (AAAC…VVAI), 139–159 (ALIV…GMII), 172–192 (FIAG…YAYI), 217–237 (ALWP…GVFS), 242–262 (AAAC…SMSL), 273–293 (GLIT…SWVI), 302–322 (ILGA…VISI), 324–344 (FFIG…VPVF), 366–386 (VAIG…IAVF), and 400–420 (FILM…IALF).

This sequence belongs to the TRAP transporter large permease family. The complex comprises the extracytoplasmic solute receptor protein UehA, and the two transmembrane proteins UehB and UehC.

It localises to the cell inner membrane. Part of the tripartite ATP-independent periplasmic (TRAP) transport system UehABC, which imports both ectoine and 5-hydroxyectoine as nutrients, and not as osmoprotectants. The sequence is that of Ectoine/5-hydroxyectoine TRAP transporter large permease protein UehC from Ruegeria pomeroyi (strain ATCC 700808 / DSM 15171 / DSS-3) (Silicibacter pomeroyi).